The chain runs to 293 residues: Ribonuclease Z (293 aa).

Positions 60, 62, 64, 65, 132, 200, and 256 each coordinate Zn(2+). Catalysis depends on Asp-64, which acts as the Proton acceptor.

This sequence belongs to the RNase Z family. In terms of assembly, homodimer. It depends on Zn(2+) as a cofactor.

It catalyses the reaction Endonucleolytic cleavage of RNA, removing extra 3' nucleotides from tRNA precursor, generating 3' termini of tRNAs. A 3'-hydroxy group is left at the tRNA terminus and a 5'-phosphoryl group is left at the trailer molecule.. Its function is as follows. Zinc phosphodiesterase, which displays some tRNA 3'-processing endonuclease activity. Probably involved in tRNA maturation, by removing a 3'-trailer from precursor tRNA. In Sulfurisphaera tokodaii (strain DSM 16993 / JCM 10545 / NBRC 100140 / 7) (Sulfolobus tokodaii), this protein is Ribonuclease Z.